We begin with the raw amino-acid sequence, 355 residues long: Protein-glutamate methylesterase/protein-glutamine glutaminase 3 (355 aa).

Residues 8–126 (RVLVVDDSPT…AEELRRWGKE (119 aa)) enclose the Response regulatory domain. 4-aspartylphosphate is present on Asp59. Residues 152-337 (PPTGARVDIF…LASMPELILQ (186 aa)) enclose the CheB-type methylesterase domain. Residues Ser166, His193, and Asp284 contribute to the active site.

It belongs to the CheB family. In terms of processing, phosphorylated by CheA. Phosphorylation of the N-terminal regulatory domain activates the methylesterase activity.

It localises to the cytoplasm. It catalyses the reaction [protein]-L-glutamate 5-O-methyl ester + H2O = L-glutamyl-[protein] + methanol + H(+). It carries out the reaction L-glutaminyl-[protein] + H2O = L-glutamyl-[protein] + NH4(+). Involved in chemotaxis. Part of a chemotaxis signal transduction system that modulates chemotaxis in response to various stimuli. Catalyzes the demethylation of specific methylglutamate residues introduced into the chemoreceptors (methyl-accepting chemotaxis proteins or MCP) by CheR. Also mediates the irreversible deamidation of specific glutamine residues to glutamic acid. This Myxococcus xanthus (strain DK1622) protein is Protein-glutamate methylesterase/protein-glutamine glutaminase 3.